A 790-amino-acid chain; its full sequence is Vacuolar protein sorting-associated protein 35C (790 aa).

N-acetylmethionine is present on Met1.

Belongs to the VPS35 family. In terms of assembly, component of the retromer complex which consists of VPS29 (MAG1), VPS26 (VPS26A or VPS26B), VPS35 (VPS35A or VPS35B or VPS35C), VPS5/17 (SNX1 or SNX2A or SNX2B). Component of a retromer subcomplex consisting of VPS29 (MAG1), VPS26 (VPS26A or VPS26B), VPS35 (VPS35A or VPS35B or VPS35C).

Its subcellular location is the cytoplasm. It is found in the endosome membrane. It localises to the prevacuolar compartment membrane. The protein localises to the golgi apparatus. The protein resides in the trans-Golgi network membrane. Functionally, plays a role in vesicular protein sorting. Component of the membrane-associated retromer complex which is essential in endosome-to-Golgi retrograde transport. Also involved in the efficient sorting of seed storage proteins. The VPS29-VPS26-VPS35 subcomplex may be involved in recycling of specific cargos from endosome to the plasma membrane. The sequence is that of Vacuolar protein sorting-associated protein 35C (VPS35C) from Arabidopsis thaliana (Mouse-ear cress).